The primary structure comprises 193 residues: MEKKQSILSPIIRITFTFLVLCGLVYPLIVTGIAQAVMKDNADGSLIYNDKNEVIGSKLIGQNFTDPRYFQGRVSSIEYKAEASGSNNYAPSNPDLEKRVEKSIEEWKKQNRAVPVTEVPIDLVTNSGSGLDPDISPQAASVQVDRISKLTNITKETLNQLIKDQTEGAALGLFGENRVNVLKLNLELQKLLK.

The chain crosses the membrane as a helical span at residues 14 to 34; sequence ITFTFLVLCGLVYPLIVTGIA.

This sequence belongs to the KdpC family. The system is composed of three essential subunits: KdpA, KdpB and KdpC.

The protein resides in the cell membrane. Functionally, part of the high-affinity ATP-driven potassium transport (or Kdp) system, which catalyzes the hydrolysis of ATP coupled with the electrogenic transport of potassium into the cytoplasm. This subunit acts as a catalytic chaperone that increases the ATP-binding affinity of the ATP-hydrolyzing subunit KdpB by the formation of a transient KdpB/KdpC/ATP ternary complex. The sequence is that of Potassium-transporting ATPase KdpC subunit from Bacillus cereus (strain G9842).